Reading from the N-terminus, the 141-residue chain is Large ribosomal subunit protein bL17 (141 aa).

This sequence belongs to the bacterial ribosomal protein bL17 family. Part of the 50S ribosomal subunit. Contacts protein L32.

The chain is Large ribosomal subunit protein bL17 from Sinorhizobium fredii (strain NBRC 101917 / NGR234).